The sequence spans 403 residues: uncharacterized protein (403 aa).

Polar residues predominate over residues 55 to 88; it reads LTGSPNPQATPKQENKSNFFSEKQSVRENGNSSA. The segment at 55 to 95 is disordered; the sequence is LTGSPNPQATPKQENKSNFFSEKQSVRENGNSSAGEKKQKW. Ser-58 is modified (phosphoserine). The J domain maps to 113 to 177; it reads QYYEILDLKK…NLRAHYDRTG (65 aa). Residues 263-283 form a helical membrane-spanning segment; that stretch reads SIFYQLLPLIVVILFAFLSNF.

It is found in the endoplasmic reticulum membrane. This is an uncharacterized protein from Schizosaccharomyces pombe (strain 972 / ATCC 24843) (Fission yeast).